Consider the following 516-residue polypeptide: Cytochrome P450 1A2 (516 aa).

Residue Ser-69 is glycosylated (O-linked (GlcNAc) serine). Phe-226 is a binding site for substrate. Residue Cys-458 participates in heme binding.

Belongs to the cytochrome P450 family. In terms of assembly, interacts with PGRMC1; the interaction requires PGRMC1 homodimerization. It depends on heme as a cofactor. In terms of tissue distribution, liver.

The protein resides in the endoplasmic reticulum membrane. The protein localises to the microsome membrane. The enzyme catalyses an organic molecule + reduced [NADPH--hemoprotein reductase] + O2 = an alcohol + oxidized [NADPH--hemoprotein reductase] + H2O + H(+). It carries out the reaction 17beta-estradiol + reduced [NADPH--hemoprotein reductase] + O2 = 2-hydroxy-17beta-estradiol + oxidized [NADPH--hemoprotein reductase] + H2O + H(+). It catalyses the reaction 17beta-estradiol + reduced [NADPH--hemoprotein reductase] + O2 = 4-hydroxy-17beta-estradiol + oxidized [NADPH--hemoprotein reductase] + H2O + H(+). The catalysed reaction is estrone + reduced [NADPH--hemoprotein reductase] + O2 = 2-hydroxyestrone + oxidized [NADPH--hemoprotein reductase] + H2O + H(+). The enzyme catalyses estrone + reduced [NADPH--hemoprotein reductase] + O2 = 4-hydroxyestrone + oxidized [NADPH--hemoprotein reductase] + H2O + H(+). It carries out the reaction cholesterol + reduced [NADPH--hemoprotein reductase] + O2 = 25-hydroxycholesterol + oxidized [NADPH--hemoprotein reductase] + H2O + H(+). It catalyses the reaction all-trans-retinol + reduced [NADPH--hemoprotein reductase] + O2 = all-trans-retinal + oxidized [NADPH--hemoprotein reductase] + 2 H2O + H(+). The catalysed reaction is all-trans-retinal + reduced [NADPH--hemoprotein reductase] + O2 = all-trans-retinoate + oxidized [NADPH--hemoprotein reductase] + H2O + 2 H(+). The enzyme catalyses (5Z,8Z,11Z,14Z)-eicosatetraenoate + reduced [NADPH--hemoprotein reductase] + O2 = (14R,15S)-epoxy-(5Z,8Z,11Z)-eicosatrienoate + oxidized [NADPH--hemoprotein reductase] + H2O + H(+). It carries out the reaction (5Z,8Z,11Z,14Z)-eicosatetraenoate + reduced [NADPH--hemoprotein reductase] + O2 = (14S,15R)-epoxy-(5Z,8Z,11Z)-eicosatrienoate + oxidized [NADPH--hemoprotein reductase] + H2O + H(+). It catalyses the reaction (5Z,8Z,11Z,14Z,17Z)-eicosapentaenoate + reduced [NADPH--hemoprotein reductase] + O2 = (17R,18S)-epoxy-(5Z,8Z,11Z,14Z)-eicosatetraenoate + oxidized [NADPH--hemoprotein reductase] + H2O + H(+). The catalysed reaction is (4Z,7Z,10Z,13Z,16Z,19Z)-docosahexaenoate + reduced [NADPH--hemoprotein reductase] + O2 = (19R,20S)-epoxy-(4Z,7Z,10Z,13Z,16Z)-docosapentaenoate + oxidized [NADPH--hemoprotein reductase] + H2O + H(+). The enzyme catalyses (5S)-hydroperoxy-(6E,8Z,11Z,14Z)-eicosatetraenoate = 5-oxo-(6E,8Z,11Z,14Z)-eicosatetraenoate + H2O. It carries out the reaction (12S)-hydroperoxy-(5Z,8Z,10E,14Z)-eicosatetraenoate = 12-oxo-(5Z,8Z,10E,14Z)-eicosatetraenoate + H2O. It catalyses the reaction (15S)-hydroperoxy-(5Z,8Z,11Z,13E)-eicosatetraenoate = 15-oxo-(5Z,8Z,11Z,13E)-eicosatetraenoate + H2O. The catalysed reaction is (13S)-hydroperoxy-(9Z,11E)-octadecadienoate = 13-oxo-(9Z,11E)-octadecadienoate + H2O. The enzyme catalyses (5Z,8Z,11Z,14Z)-eicosatetraenoate + reduced [NADPH--hemoprotein reductase] + O2 = 13-hydroxy-(5Z,8Z,11Z,14Z)-eicosatetraenoate + oxidized [NADPH--hemoprotein reductase] + H2O + H(+). It carries out the reaction (5Z,8Z,11Z,14Z)-eicosatetraenoate + reduced [NADPH--hemoprotein reductase] + O2 = 19-hydroxy-(5Z,8Z,11Z,14Z)-eicosatetraenoate + oxidized [NADPH--hemoprotein reductase] + H2O + H(+). It catalyses the reaction (9Z,12Z)-octadecadienoate + reduced [NADPH--hemoprotein reductase] + O2 = 11-hydroxy-(9Z,12Z)-octadecadienoate + oxidized [NADPH--hemoprotein reductase] + H2O + H(+). It functions in the pathway cofactor metabolism; retinol metabolism. Its pathway is steroid metabolism; cholesterol metabolism. It participates in lipid metabolism; arachidonate metabolism. A cytochrome P450 monooxygenase involved in the metabolism of various endogenous substrates, including fatty acids, steroid hormones and vitamins. Mechanistically, uses molecular oxygen inserting one oxygen atom into a substrate, and reducing the second into a water molecule, with two electrons provided by NADPH via cytochrome P450 reductase (NADPH--hemoprotein reductase). Catalyzes the hydroxylation of carbon-hydrogen bonds. Exhibits high catalytic activity for the formation of hydroxyestrogens from estrone (E1) and 17beta-estradiol (E2), namely 2-hydroxy E1 and E2. Metabolizes cholesterol toward 25-hydroxycholesterol, a physiological regulator of cellular cholesterol homeostasis. May act as a major enzyme for all-trans retinoic acid biosynthesis in the liver. Catalyzes two successive oxidative transformation of all-trans retinol to all-trans retinal and then to the active form all-trans retinoic acid. Primarily catalyzes stereoselective epoxidation of the last double bond of polyunsaturated fatty acids (PUFA), displaying a strong preference for the (R,S) stereoisomer. Catalyzes bisallylic hydroxylation and omega-1 hydroxylation of PUFA. May also participate in eicosanoids metabolism by converting hydroperoxide species into oxo metabolites (lipoxygenase-like reaction, NADPH-independent). Plays a role in the oxidative metabolism of xenobiotics. Catalyzes the N-hydroxylation of heterocyclic amines and the O-deethylation of phenacetin. Metabolizes caffeine via N3-demethylation. The chain is Cytochrome P450 1A2 from Homo sapiens (Human).